Here is a 1118-residue protein sequence, read N- to C-terminus: Cytospin-A (1118 aa).

Disordered regions lie at residues 1-50 (MKKA…AALS), 75-175 (KKSN…DNQI), 294-324 (SLSP…GSVE), and 359-391 (SSDD…NASE). 3 stretches are compositionally biased toward low complexity: residues 34-48 (APTG…AAAA), 80-90 (SSAAPSAPAPA), and 99-113 (KSST…RSTS). The span at 120–131 (SSTRERLRERTR) shows a compositional bias: basic and acidic residues. The span at 133–145 (NQSKKLPSVSQGA) shows a compositional bias: polar residues. Basic and acidic residues predominate over residues 158 to 171 (TATEGDIRMSKSKS). Positions 168–281 (KSKSDNQISD…LNALGFSLEQ (114 aa)) form a coiled coil. Polar residues predominate over residues 294-304 (SLSPEITPGNQ). The segment covering 359 to 373 (SSDDALDAPSSSESE) has biased composition (low complexity). 3 positions are modified to phosphoserine: Ser385, Ser386, and Ser390. Coiled-coil stretches lie at residues 395 to 450 (ACLT…MESL) and 488 to 808 (RYME…RGRV). Phosphoserine is present on residues Ser869, Ser882, and Ser888. Residues 916-999 (EHLLRTSSTS…STRSRIREER (84 aa)) form a disordered region. Positions 947–957 (RSSEEMKRDIS) are enriched in basic and acidic residues. Low complexity predominate over residues 972–992 (TTSPQLSLSSSPTASVTPSTR). The region spanning 1012–1117 (GSKRNALLKW…YVTAIYKYFE (106 aa)) is the Calponin-homology (CH) domain.

It belongs to the cytospin-A family. In terms of assembly, may interact with both microtubules and actin cytoskeleton.

It localises to the cytoplasm. The protein resides in the cytoskeleton. The protein localises to the spindle. It is found in the cell junction. Its subcellular location is the gap junction. Functionally, involved in cytokinesis and spindle organization. May play a role in actin cytoskeleton organization and microtubule stabilization and hence required for proper cell adhesion and migration. This Rattus norvegicus (Rat) protein is Cytospin-A (Specc1l).